The primary structure comprises 258 residues: Imidazole glycerol phosphate synthase subunit HisF (258 aa).

Active-site residues include D11 and D130.

It belongs to the HisA/HisF family. In terms of assembly, heterodimer of HisH and HisF.

The protein localises to the cytoplasm. The enzyme catalyses 5-[(5-phospho-1-deoxy-D-ribulos-1-ylimino)methylamino]-1-(5-phospho-beta-D-ribosyl)imidazole-4-carboxamide + L-glutamine = D-erythro-1-(imidazol-4-yl)glycerol 3-phosphate + 5-amino-1-(5-phospho-beta-D-ribosyl)imidazole-4-carboxamide + L-glutamate + H(+). It participates in amino-acid biosynthesis; L-histidine biosynthesis; L-histidine from 5-phospho-alpha-D-ribose 1-diphosphate: step 5/9. Its function is as follows. IGPS catalyzes the conversion of PRFAR and glutamine to IGP, AICAR and glutamate. The HisF subunit catalyzes the cyclization activity that produces IGP and AICAR from PRFAR using the ammonia provided by the HisH subunit. The polypeptide is Imidazole glycerol phosphate synthase subunit HisF (Azorhizobium caulinodans (strain ATCC 43989 / DSM 5975 / JCM 20966 / LMG 6465 / NBRC 14845 / NCIMB 13405 / ORS 571)).